The primary structure comprises 266 residues: Cysteine-rich repeat secretory protein 41 (266 aa).

The signal sequence occupies residues 1–26 (MSSVFGSVHILAMIAIQLLLTHSVSS). Gnk2-homologous domains follow at residues 33–136 (YLHH…SVAS) and 142–253 (YEND…LYPF).

This sequence belongs to the cysteine-rich repeat secretory protein family.

It is found in the secreted. In Arabidopsis thaliana (Mouse-ear cress), this protein is Cysteine-rich repeat secretory protein 41 (CRRSP41).